The primary structure comprises 329 residues: GTP 3',8-cyclase (329 aa).

The 229-residue stretch at 1–229 folds into the Radical SAM core domain; sequence MNQVDYLRIS…EGYVRGNGPA (229 aa). Arg8 contributes to the GTP binding site. Residues Cys15 and Cys19 each contribute to the [4Fe-4S] cluster site. Tyr21 is a binding site for S-adenosyl-L-methionine. Residue Cys22 coordinates [4Fe-4S] cluster. Arg60 lines the GTP pocket. Residue Gly64 coordinates S-adenosyl-L-methionine. A GTP-binding site is contributed by Thr91. Ser115 lines the S-adenosyl-L-methionine pocket. Lys155 is a binding site for GTP. Met189 is an S-adenosyl-L-methionine binding site. [4Fe-4S] cluster is bound by residues Cys252 and Cys255. 257-259 is a GTP binding site; sequence RVR. Cys269 provides a ligand contact to [4Fe-4S] cluster.

The protein belongs to the radical SAM superfamily. MoaA family. In terms of assembly, monomer and homodimer. [4Fe-4S] cluster is required as a cofactor.

The enzyme catalyses GTP + AH2 + S-adenosyl-L-methionine = (8S)-3',8-cyclo-7,8-dihydroguanosine 5'-triphosphate + 5'-deoxyadenosine + L-methionine + A + H(+). It functions in the pathway cofactor biosynthesis; molybdopterin biosynthesis. Catalyzes the cyclization of GTP to (8S)-3',8-cyclo-7,8-dihydroguanosine 5'-triphosphate. The chain is GTP 3',8-cyclase from Cyanothece sp. (strain PCC 7425 / ATCC 29141).